The following is a 473-amino-acid chain: GTPase Der (473 aa).

EngA-type G domains lie at 3-167 (FTVA…GKDR) and 203-378 (LRVA…RVWN). Residues 9–16 (GRPNVGKS), 56–60 (DTAGL), 119–122 (NKSE), 209–216 (GRPNAGKS), 256–260 (DTAGM), and 321–324 (NKWD) each bind GTP. A KH-like domain is found at 379 to 463 (KRISTAKLNR…PIRIHFRSAE (85 aa)).

This sequence belongs to the TRAFAC class TrmE-Era-EngA-EngB-Septin-like GTPase superfamily. EngA (Der) GTPase family. In terms of assembly, associates with the 50S ribosomal subunit.

GTPase that plays an essential role in the late steps of ribosome biogenesis. The polypeptide is GTPase Der (Rhizobium leguminosarum bv. trifolii (strain WSM2304)).